The following is a 406-amino-acid chain: RNA exonuclease 4 (406 aa).

The segment covering 1 to 10 (MAPELSSNWK) has biased composition (polar residues). Disordered stretches follow at residues 1–108 (MAPE…TLPS) and 156–181 (AGLT…PTDL). 3 stretches are compositionally biased toward low complexity: residues 54 to 64 (SQQQQQASNPS), 72 to 82 (SQTQSQPSSQK), and 94 to 108 (SKPT…TLPS). The segment covering 162–173 (GHSSSSPKSNKN) has biased composition (polar residues). Residues 216–367 (YLSIDCEMVG…EDARVAMLLF (152 aa)) form the Exonuclease domain. The span at 377-387 (ENSNRYEEGQA) shows a compositional bias: basic and acidic residues. The segment at 377-406 (ENSNRYEEGQAKKGGNGGGGGGGKKKKGKK) is disordered. Positions 388-398 (KKGGNGGGGGG) are enriched in gly residues.

This sequence belongs to the REXO4 family.

It localises to the nucleus. In terms of biological role, exoribonuclease involved in ribosome biosynthesis. Involved in the processing of ITS1, the internal transcribed spacer localized between the 18S and 5.8S rRNAs. This Neurospora crassa (strain ATCC 24698 / 74-OR23-1A / CBS 708.71 / DSM 1257 / FGSC 987) protein is RNA exonuclease 4 (rex-4).